The sequence spans 292 residues: Ribosomal protein L11 methyltransferase (292 aa).

T144, G165, D187, and N229 together coordinate S-adenosyl-L-methionine.

Belongs to the methyltransferase superfamily. PrmA family.

Its subcellular location is the cytoplasm. It catalyses the reaction L-lysyl-[protein] + 3 S-adenosyl-L-methionine = N(6),N(6),N(6)-trimethyl-L-lysyl-[protein] + 3 S-adenosyl-L-homocysteine + 3 H(+). In terms of biological role, methylates ribosomal protein L11. This is Ribosomal protein L11 methyltransferase from Pseudomonas putida (strain ATCC 47054 / DSM 6125 / CFBP 8728 / NCIMB 11950 / KT2440).